Here is a 331-residue protein sequence, read N- to C-terminus: Ribonuclease Z (331 aa).

7 residues coordinate Zn(2+): H56, H58, D60, H61, H162, D235, and H297. D60 functions as the Proton acceptor in the catalytic mechanism.

This sequence belongs to the RNase Z family. Homodimer. The cofactor is Zn(2+).

The enzyme catalyses Endonucleolytic cleavage of RNA, removing extra 3' nucleotides from tRNA precursor, generating 3' termini of tRNAs. A 3'-hydroxy group is left at the tRNA terminus and a 5'-phosphoryl group is left at the trailer molecule.. Functionally, zinc phosphodiesterase, which displays some tRNA 3'-processing endonuclease activity. Probably involved in tRNA maturation, by removing a 3'-trailer from precursor tRNA. This chain is Ribonuclease Z (rnz), found in Deinococcus radiodurans (strain ATCC 13939 / DSM 20539 / JCM 16871 / CCUG 27074 / LMG 4051 / NBRC 15346 / NCIMB 9279 / VKM B-1422 / R1).